The chain runs to 305 residues: tRNA dimethylallyltransferase (305 aa).

Position 11–18 (11–18 (GPTAVGKT)) interacts with ATP. Position 13–18 (13–18 (TAVGKT)) interacts with substrate. The interaction with substrate tRNA stretch occupies residues 36 to 39 (DSMQ).

The protein belongs to the IPP transferase family. In terms of assembly, monomer. Requires Mg(2+) as cofactor.

It catalyses the reaction adenosine(37) in tRNA + dimethylallyl diphosphate = N(6)-dimethylallyladenosine(37) in tRNA + diphosphate. Functionally, catalyzes the transfer of a dimethylallyl group onto the adenine at position 37 in tRNAs that read codons beginning with uridine, leading to the formation of N6-(dimethylallyl)adenosine (i(6)A). This is tRNA dimethylallyltransferase from Listeria monocytogenes serotype 4b (strain CLIP80459).